Reading from the N-terminus, the 347-residue chain is Putative ORC1-type DNA replication protein 1 (347 aa).

ATP contacts are provided by residues 34-38, Tyr-167, and Arg-179; that span reads TGKTV.

Belongs to the CDC6/cdc18 family.

Its function is as follows. Involved in regulation of DNA replication. Has no effect on MCM helicase activity, either stimulatory or inhibitory. Does not bind DNA. This is Putative ORC1-type DNA replication protein 1 (cdc6-1) from Thermoplasma acidophilum (strain ATCC 25905 / DSM 1728 / JCM 9062 / NBRC 15155 / AMRC-C165).